The chain runs to 171 residues: Peptidyl-prolyl cis-trans isomerase (171 aa).

Residues 7 to 170 (FFDLTIGGAP…KPVVIADCGQ (164 aa)) form the PPIase cyclophilin-type domain.

The protein belongs to the cyclophilin-type PPIase family. Expressed in leaves, floral buds, growing shoots and stamens at anthesis.

It is found in the cytoplasm. The catalysed reaction is [protein]-peptidylproline (omega=180) = [protein]-peptidylproline (omega=0). Its activity is regulated as follows. Binds cyclosporin A (CsA). CsA mediates some of its effects via an inhibitory action on PPIase. Its function is as follows. PPIases accelerate the folding of proteins. It catalyzes the cis-trans isomerization of proline imidic peptide bonds in oligopeptides. The polypeptide is Peptidyl-prolyl cis-trans isomerase (Solanum lycopersicum (Tomato)).